A 339-amino-acid polypeptide reads, in one-letter code: MVREEVAGSTQTLQWKCVESRVDSKRLYYGRFILSPLRKGQADTVGIALRRALLGEIEGTCITRAKFGSVPHEYSTIAGIEESVQEILLNLKEIVLRSNLYGVRDASICVKGPRYITAQDIILPPSVETVDTAQPIANLTEPIDFCIDLQIKRDRGYQTELRKNYQDGSYPIDAVSMPVRNVNYSIFSCGNGNEKHEILFLEIWTNGSLTPKEALYEASRNLIDLFLPFLHAEEEGTSFEENKNRFTPPLFTFQKRLTNLKKNKKGIPLNCIFIDQLELTSRTYNCLKRANIHTLLDLLSKTEEDLMRIDSFRMEDRKHIWDTLEKHLPIDLLKNKLSF.

An alpha N-terminal domain (alpha-NTD) region spans residues 1 to 233 (MVREEVAGST…DLFLPFLHAE (233 aa)). Residues 266–339 (GIPLNCIFID…IDLLKNKLSF (74 aa)) are alpha C-terminal domain (alpha-CTD).

The protein belongs to the RNA polymerase alpha chain family. In terms of assembly, in plastids the minimal PEP RNA polymerase catalytic core is composed of four subunits: alpha, beta, beta', and beta''. When a (nuclear-encoded) sigma factor is associated with the core the holoenzyme is formed, which can initiate transcription.

It is found in the plastid. It localises to the chloroplast. The catalysed reaction is RNA(n) + a ribonucleoside 5'-triphosphate = RNA(n+1) + diphosphate. DNA-dependent RNA polymerase catalyzes the transcription of DNA into RNA using the four ribonucleoside triphosphates as substrates. This is DNA-directed RNA polymerase subunit alpha from Hordeum bulbosum (Bulbous barley).